A 75-amino-acid chain; its full sequence is Small ribosomal subunit protein bS18 (75 aa).

Belongs to the bacterial ribosomal protein bS18 family. In terms of assembly, part of the 30S ribosomal subunit. Forms a tight heterodimer with protein bS6.

Functionally, binds as a heterodimer with protein bS6 to the central domain of the 16S rRNA, where it helps stabilize the platform of the 30S subunit. The protein is Small ribosomal subunit protein bS18 of Pasteurella multocida (strain Pm70).